The chain runs to 477 residues: MFKNAFANLQKVGKSLMLPVSVLPIAGILLGVGSANFSWLPAVVSHVMAEAGGSVFANMPLIFAIGVALGFTNNDGVSALAAVVAYGIMVKTMAVVAPLVLHLPAEEIASKHLADTGVLGGIISGAIAAYMFNRFYRIKLPEYLGFFAGKRFVPIISGLAAIFTGVVLSFIWPPIGSAIQTFSQWAAYQNPVVAFGIYGFIERCLVPFGLHHIWNVPFQMQIGEYTNAAGQVFHGDIPRYMAGDPTAGKLSGGFLFKMYGLPAAAIAIWHSAKPENRAKVGGIMISAALTSFLTGITEPIEFSFMFVAPILYIIHAILAGLAFPICILLGMRDGTSFSHGLIDFIVLSGNSSKLWLFPIVGIGYAIVYYTIFRVLIKALDLKTPGREDATEDAKATGTSEMAPALVAAFGGKENITNLDACITRLRVSVADVSKVDQAGLKKLGAAGVVVAGSGVQAIFGTKSDNLKTEMDEYIRNH.

Over 1-14 (MFKNAFANLQKVGK) the chain is Cytoplasmic. Positions 1–388 (MFKNAFANLQ…LDLKTPGRED (388 aa)) constitute a PTS EIIC type-1 domain. The helical transmembrane segment at 15–35 (SLMLPVSVLPIAGILLGVGSA) threads the bilayer. Residues 36–50 (NFSWLPAVVSHVMAE) lie on the Periplasmic side of the membrane. A helical transmembrane segment spans residues 51 to 71 (AGGSVFANMPLIFAIGVALGF). Over 72-79 (TNNDGVSA) the chain is Cytoplasmic. The chain crosses the membrane as a helical span at residues 80 to 100 (LAAVVAYGIMVKTMAVVAPLV). The Periplasmic portion of the chain corresponds to 101–111 (LHLPAEEIASK). Residues 112–132 (HLADTGVLGGIISGAIAAYMF) traverse the membrane as a helical segment. At 133-151 (NRFYRIKLPEYLGFFAGKR) the chain is on the cytoplasmic side. Residues 152-172 (FVPIISGLAAIFTGVVLSFIW) form a helical membrane-spanning segment. Residues 173–190 (PPIGSAIQTFSQWAAYQN) are Periplasmic-facing. A helical transmembrane segment spans residues 191–211 (PVVAFGIYGFIERCLVPFGLH). Topologically, residues 212-249 (HIWNVPFQMQIGEYTNAAGQVFHGDIPRYMAGDPTAGK) are cytoplasmic. The chain crosses the membrane as a helical span at residues 250–270 (LSGGFLFKMYGLPAAAIAIWH). The Periplasmic portion of the chain corresponds to 271–279 (SAKPENRAK). The chain crosses the membrane as a helical span at residues 280–300 (VGGIMISAALTSFLTGITEPI). The Cytoplasmic portion of the chain corresponds to 301–309 (EFSFMFVAP). A helical membrane pass occupies residues 310–330 (ILYIIHAILAGLAFPICILLG). Residues 331–355 (MRDGTSFSHGLIDFIVLSGNSSKLW) are Periplasmic-facing. The chain crosses the membrane as a helical span at residues 356–376 (LFPIVGIGYAIVYYTIFRVLI). The Cytoplasmic segment spans residues 377–477 (KALDLKTPGR…TEMDEYIRNH (101 aa)). The PTS EIIB type-1 domain maps to 399–477 (SEMAPALVAA…TEMDEYIRNH (79 aa)). The active-site Phosphocysteinsyse intermediate; for EIIB activity is the cysteine 421. Cysteine 421 carries the post-translational modification Phosphocysteine.

It is found in the cell inner membrane. It carries out the reaction N(pros)-phospho-L-histidyl-[protein] + D-glucose(out) = D-glucose 6-phosphate(in) + L-histidyl-[protein]. In terms of biological role, the phosphoenolpyruvate-dependent sugar phosphotransferase system (sugar PTS), a major carbohydrate active transport system, catalyzes the phosphorylation of incoming sugar substrates concomitantly with their translocation across the cell membrane. The enzyme II complex composed of PtsG and Crr is involved in glucose transport. Also functions as a chemoreceptor monitoring the environment for changes in sugar concentration. This Escherichia coli O6:H1 (strain CFT073 / ATCC 700928 / UPEC) protein is PTS system glucose-specific EIICB component (ptsG).